The primary structure comprises 228 residues: Phosphoglycolate phosphatase (228 aa).

The active-site Nucleophile is the D9. Mg(2+)-binding residues include D9 and D11. K151 is a substrate binding site. The Mg(2+) site is built by D174 and D178.

It belongs to the archaeal SPP-like hydrolase family. Mg(2+) serves as cofactor.

It carries out the reaction 2-phosphoglycolate + H2O = glycolate + phosphate. Functionally, catalyzes the dephosphorylation of 2-phosphoglycolate. This Pyrobaculum aerophilum (strain ATCC 51768 / DSM 7523 / JCM 9630 / CIP 104966 / NBRC 100827 / IM2) protein is Phosphoglycolate phosphatase.